Consider the following 242-residue polypeptide: Small ribosomal subunit protein uS2 (242 aa).

Belongs to the universal ribosomal protein uS2 family.

In Aliivibrio fischeri (strain ATCC 700601 / ES114) (Vibrio fischeri), this protein is Small ribosomal subunit protein uS2.